A 449-amino-acid chain; its full sequence is Maturation protein A (449 aa).

It belongs to the Leviviricetes maturation protein family. Interacts with the host pilus.

It localises to the virion. In terms of biological role, the maturation protein is required for the typical attachment of the phage to the side of the bacterial F-pili. Binds to sequences located toward each end of the genome, hence circularizing it. The RNA genome-maturation protein A complex is released from the capsid upon host receptor binding. Maturation protein A enters the cell along with the viral RNA. The protein is Maturation protein A of Pseudomonas aeruginosa (Bacteriophage PP7).